A 150-amino-acid chain; its full sequence is Probable antibacterial peptide (150 aa).

The signal sequence occupies residues 1–19 (MHIARFCLLSSMAVLALSA).

The protein resides in the secreted. Functionally, has antibacterial activity in vitro. This Riptortus clavatus (Bean bug) protein is Probable antibacterial peptide.